The chain runs to 478 residues: Septin-4 (478 aa).

The segment at 1–115 (MDRSLGWQGN…RSPWGKLDPY (115 aa)) is disordered. Basic and acidic residues predominate over residues 13–26 (PEDRTEAGIKRFLE). Residues 95 to 108 (APAPLSPSARPRSP) show a composition bias toward low complexity. A phosphoserine mark is found at serine 117 and serine 118. Positions 141-414 (KGFDFTLMVA…ENYRAQCIQS (274 aa)) constitute a Septin-type G domain. The interval 151-158 (GESGLGKS) is G1 motif. GTP is bound by residues 151–158 (GESGLGKS) and threonine 185. The G3 motif stretch occupies residues 208–211 (DTPG). Positions 289–292 (AKAD) are G4 motif. GTP is bound at residue 290-298 (KADTLTPPE). Serine 325 bears the Phosphoserine mark. GTP-binding residues include glycine 348 and arginine 363. Residues 428–448 (LTRESGTDFPIPAVPPGTDPE) form a disordered region. Serine 432 is subject to Phosphoserine. Residue threonine 434 is modified to Phosphothreonine. The stretch at 447 to 478 (PETEKLIREKDEELRRMQEMLHKIQKQMKENY) forms a coiled coil.

It belongs to the TRAFAC class TrmE-Era-EngA-EngB-Septin-like GTPase superfamily. Septin GTPase family. As to quaternary structure, septins polymerize into heterooligomeric protein complexes that form filaments, and can associate with cellular membranes, actin filaments and microtubules. GTPase activity is required for filament formation. Interacts with SEPTIN8. In a mesenchymal cell line, interacts with SEPTIN9 isoform 2 variants HNA Trp-106 and Phe-111, but not the wild type SEPTIN9. Component of a septin core octameric complex consisting of SEPTIN12, SEPTIN7, SEPTIN6 and SEPTIN2 or SEPTIN4 in the order 12-7-6-2-2-6-7-12 or 12-7-6-4-4-6-7-12. Interacts with SEPTIN14 (via C-terminus). Interacts with DYRK1A. Interacts with SLC6A3/DAT and SNCA/alpha-synuclein. Interacts with STX1A; in the striatum. Interacts with XIAP (via BIR3 domain) following the induction of apoptosis. Interacts with AREL1 (via HECT domain); in the cytoplasm following induction of apoptosis. Part of a complex composed of SEPTIN4 isoform ARTS, XIAP and BCL2, within the complex interacts with both BCL2 (via BH3 domain) and XIAP, ARTS acts as a scaffold protein and stabilizes the complex. Interacts with XIAP (via BIR3 domain) following the induction of apoptosis. Post-translationally, phosphorylated by DYRK1A. In terms of processing, ubiquitinated by AREL1. Widely expressed in adult and fetal tissues with highest expression in adult brain (at protein level), heart, liver and adrenal gland and fetal heart, kidney, liver and lung. Expressed in presynaptic terminals of dopaminergic neurons projecting from the substantia nigra pars compacta to the striatum (at protein level). Expressed in axonal varicosities in dopaminergic nerve terminals (at protein level). Expressed in the putamen and in the adjacent cerebral cortex (at protein level). Expressed in colonic crypts (at protein level). Also expressed in colorectal cancers and malignant melanomas. Expressed in platelets. As to expression, highly expressed in the brain and heart.

Its subcellular location is the cytoplasm. The protein resides in the cell projection. It is found in the cilium. The protein localises to the flagellum. It localises to the cytoplasmic vesicle. Its subcellular location is the secretory vesicle. The protein resides in the axon. It is found in the dendrite. The protein localises to the perikaryon. It localises to the synapse. Its subcellular location is the mitochondrion. The protein resides in the nucleus. Functionally, filament-forming cytoskeletal GTPase. Pro-apoptotic protein involved in LGR5-positive intestinal stem cell and Paneth cell expansion in the intestines, via its interaction with XIAP. May also play a role in the regulation of cell fate in the intestine. Positive regulator of apoptosis involved in hematopoietic stem cell homeostasis; via its interaction with XIAP. Negative regulator of repair and hair follicle regeneration in response to injury, due to inhibition of hair follicle stem cell proliferation, potentially via its interaction with XIAP. Plays an important role in male fertility and sperm motility. During spermiogenesis, essential for the establishment of the annulus (a fibrous ring structure connecting the midpiece and the principal piece of the sperm flagellum) which is a requisite for the structural and mechanical integrity of the sperm. Involved in the migration of cortical neurons and the formation of neuron leading processes during embryonic development. Required for dopaminergic metabolism in presynaptic autoreceptors; potentially via activity as a presynaptic scaffold protein. Required for the induction of cell death mediated by TGF-beta and possibly by other apoptotic stimuli. Induces apoptosis through binding and inhibition of XIAP resulting in significant reduction in XIAP levels, leading to caspase activation and cell death. Mediates the interaction between BCL2 and XIAP, thereby positively regulating the ubiquitination and degradation of BCL2 and promoting apoptosis. This Homo sapiens (Human) protein is Septin-4.